Reading from the N-terminus, the 430-residue chain is Asparagine--tRNA ligase (430 aa).

Belongs to the class-II aminoacyl-tRNA synthetase family. In terms of assembly, homodimer.

It is found in the cytoplasm. The enzyme catalyses tRNA(Asn) + L-asparagine + ATP = L-asparaginyl-tRNA(Asn) + AMP + diphosphate + H(+). This is Asparagine--tRNA ligase from Bacillus velezensis (strain DSM 23117 / BGSC 10A6 / LMG 26770 / FZB42) (Bacillus amyloliquefaciens subsp. plantarum).